We begin with the raw amino-acid sequence, 511 residues long: DEP domain-containing protein 7 (511 aa).

Residues 46–136 (LQTQVEVKKR…SSCSLYRFTT (91 aa)) form the DEP domain.

Belongs to the DEPDC7 family.

In Rattus norvegicus (Rat), this protein is DEP domain-containing protein 7 (Depdc7).